A 281-amino-acid polypeptide reads, in one-letter code: Urease accessory protein UreD (281 aa).

The interval 1–25 (MLNTLEPQPCETDALSPRLQRSTGS) is disordered.

The protein belongs to the UreD family. UreD, UreF and UreG form a complex that acts as a GTP-hydrolysis-dependent molecular chaperone, activating the urease apoprotein by helping to assemble the nickel containing metallocenter of UreC. The UreE protein probably delivers the nickel.

The protein resides in the cytoplasm. In terms of biological role, required for maturation of urease via the functional incorporation of the urease nickel metallocenter. The protein is Urease accessory protein UreD of Dinoroseobacter shibae (strain DSM 16493 / NCIMB 14021 / DFL 12).